The following is a 381-amino-acid chain: Probable cyclic AMP-AMP-GMP nucleotide synthase (381 aa).

Residues Ser-53 and Arg-56 each coordinate GTP. Catalysis depends on residues Asp-69 and Asp-71. Residues Asp-69 and Asp-71 each coordinate Mg(2+). A GTP-binding site is contributed by Arg-109. Residue Asp-121 is part of the active site. Mg(2+) is bound by residues Asp-121 and Asp-196. 5 residues coordinate GTP: Arg-197, Arg-204, Thr-205, Gln-210, and Arg-307. Residues 348 to 381 form a disordered region; it reads GTKFPFPGPQGGDRSGGFTAPTQPAEPQKTGRFA.

It belongs to the CD-NTase family. D02 subfamily. Requires Mg(2+) as cofactor.

It catalyses the reaction GTP + 2 ATP = 3',3',3'-cAAG + 3 diphosphate. Cyclic nucleotide synthase (second messenger synthase) of a CBASS antivirus system. CBASS (cyclic oligonucleotide-based antiphage signaling system) provides immunity against bacteriophage. The CD-NTase protein synthesizes cyclic nucleotides in response to infection; these serve as specific second messenger signals. The signals activate a diverse range of effectors, leading to bacterial cell death and thus abortive phage infection. In terms of biological role, cyclic nucleotide synthase, synthesizes a tricyclic nucleotide with AMP and GMP moieties, probably 3',3',3'-cyclic AMP-AMP-GMP (3'3'3'-cAAG). Controls the activity of the associated CBASS effector protein. This Salmonella paratyphi B (Salmonella enterica subsp. enterica serovar Paratyphi B) protein is Probable cyclic AMP-AMP-GMP nucleotide synthase.